Here is a 270-residue protein sequence, read N- to C-terminus: MLLGSVPQLDRVAVQLGPFPVYWYGIIIGTGVLLGLWLATREGERLGIPKDTFVDLVLIAVPIAILFARMYYVIFEWEYYAQNPSQIINIRQGGLAIHGGLIGAVITGILFAKRRGVSFWKLADIAAPSILLGQAIGRWGNFMNQEAHGDEVTRQFLEGLHLPDFIINQMYIDGVYYHPTFLYESLWNFAGVILLLALRKVNLRRGELFFTYLIWYSIGRFFVEGLRTDSLMLGPLRIAQVMSIGLVVISIIFIIVRRKMGQADKRYSEN.

4 helical membrane passes run 19 to 39 (FPVYWYGIIIGTGVLLGLWLA), 56 to 76 (LVLIAVPIAILFARMYYVIFE), 92 to 112 (QGGLAIHGGLIGAVITGILFA), and 116 to 136 (GVSFWKLADIAAPSILLGQAI). Residue Arg-138 participates in a 1,2-diacyl-sn-glycero-3-phospho-(1'-sn-glycerol) binding. A run of 3 helical transmembrane segments spans residues 178–198 (HPTFLYESLWNFAGVILLLAL), 206–226 (GELFFTYLIWYSIGRFFVEGL), and 236–256 (LRIAQVMSIGLVVISIIFIIV).

It belongs to the Lgt family.

Its subcellular location is the cell membrane. It catalyses the reaction L-cysteinyl-[prolipoprotein] + a 1,2-diacyl-sn-glycero-3-phospho-(1'-sn-glycerol) = an S-1,2-diacyl-sn-glyceryl-L-cysteinyl-[prolipoprotein] + sn-glycerol 1-phosphate + H(+). It participates in protein modification; lipoprotein biosynthesis (diacylglyceryl transfer). Functionally, catalyzes the transfer of the diacylglyceryl group from phosphatidylglycerol to the sulfhydryl group of the N-terminal cysteine of a prolipoprotein, the first step in the formation of mature lipoproteins. This chain is Phosphatidylglycerol--prolipoprotein diacylglyceryl transferase, found in Bacillus cereus (strain ZK / E33L).